The primary structure comprises 992 residues: Leucine-rich repeat receptor-like serine/threonine-protein kinase BAM3 (992 aa).

Positions 1 to 21 (MADKIFTFFLILSSISPLLCS) are cleaved as a signal peptide. At 22-656 (SLISPLNLSL…ARSRGEISAK (635 aa)) the chain is on the extracellular side. A glycan (N-linked (GlcNAc...) asparagine) is linked at Asn28. The cysteines at positions 64 and 71 are disulfide-linked. 2 N-linked (GlcNAc...) asparagine glycosylation sites follow: Asn75 and Asn87. LRR repeat units follow at residues 75–99 (NQSITRLDLSNLNISGTISPEISRL), 100–124 (SPSLVFLDISSNSFSGELPKEIYEL), 126–148 (GLEVLNISSNVFEGELETRGFSQ), 150–173 (TQLVTLDAYDNSFNGSLPLSLTTL), 174–199 (TRLEHLDLGGNYFDGEIPRSYGSFLS), and 201–221 (KFLSLSGNDLRGRIPNELANI). Residues Asn131 and Asn163 are each glycosylated (N-linked (GlcNAc...) asparagine). N-linked (GlcNAc...) asparagine glycosylation is present at Asn220. Residues 226–231 (QLYLGY) carry the CLE45 peptide binding motif. 15 LRR repeats span residues 246-270 (LINLVHLDLANCSLKGSIPAELGNL), 271-294 (KNLEVLFLQTNELTGSVPRELGNM), 296-320 (SLKTLDLSNNFLEGEIPLELSGLQK), 322-342 (QLFNLFFNRLHGEIPEFVSEL), 343-366 (PDLQILKLWHNNFTGKIPSKLGSN), 368-391 (NLIEIDLSTNKLTGLIPESLCFGR), 393-414 (LKILILFNNFLFGPLPEDLGQC), 415-438 (EPLWRFRLGQNFLTSKLPKGLIYL), 439-462 (PNLSLLELQNNFLTGEIPEEEAGN), 465-489 (FSSLTQINLSNNRLSGPIPGSIRNL), 491-513 (SLQILLLGANRLSGQIPGEIGSL), 514-536 (KSLLKIDMSRNNFSGKFPPEFGD), 537-561 (CMSLTYLDLSHNQISGQIPVQISQI), 563-585 (ILNYLNVSWNSFNQSLPNELGYM), and 586-610 (KSLTSADFSHNNFSGSVPTSGQFSY). N-linked (GlcNAc...) asparagine glycosylation is found at Asn256 and Asn293. Asn354 carries N-linked (GlcNAc...) asparagine glycosylation. 2 N-linked (GlcNAc...) asparagine glycosylation sites follow: Asn440 and Asn472. An N-linked (GlcNAc...) asparagine glycan is attached at Asn525. Residues Asn568, Asn575, Asn597, Asn613, Asn631, and Asn635 are each glycosylated (N-linked (GlcNAc...) asparagine). A helical membrane pass occupies residues 657-677 (FKLFFGLGLLGFFLVFVVLAV). Topologically, residues 678-992 (VKNRRMRKNN…ISQAKQPNTF (315 aa)) are cytoplasmic. The region spanning 710–992 (VKENHVIGKG…ISQAKQPNTF (283 aa)) is the Protein kinase domain. Residues 716-724 (IGKGGRGIV) and Lys738 contribute to the ATP site. The active-site Proton acceptor is the Asp836.

Belongs to the protein kinase superfamily. Ser/Thr protein kinase family. In terms of assembly, interacts with CLE45, especially in roots. Binds to the dimer CLV2/CRN. As to expression, expressed in seedlings, roots, leaves, stems, inflorescences, flowers and siliques. In roots, confined to protophloem and sieve element precursor cells.

Its subcellular location is the cell membrane. The protein localises to the endoplasmic reticulum membrane. The catalysed reaction is L-seryl-[protein] + ATP = O-phospho-L-seryl-[protein] + ADP + H(+). It catalyses the reaction L-threonyl-[protein] + ATP = O-phospho-L-threonyl-[protein] + ADP + H(+). In terms of biological role, necessary for male gametophyte development, as well as ovule specification and function. Required for the development of high-ordered vascular strands within the leaf and a correlated control of leaf shape, size and symmetry. LRR-rich receptor-like kinase (LRR-RLK) involved in the perception of CLE45 peptide ligand which mediates root growth inhibition by repressing protophloem differentiation; this mechanism requires CRN. BRX, BAM3, and CLE45 act together to regulate the transition of protophloem cells from proliferation to differentiation, thus impinging on postembryonic growth capacity of the root meristem. Necessary for CLE45 peptide-triggered accumulation of MAKR5 in developing sieve elements. The sequence is that of Leucine-rich repeat receptor-like serine/threonine-protein kinase BAM3 from Arabidopsis thaliana (Mouse-ear cress).